A 185-amino-acid polypeptide reads, in one-letter code: Methanol dehydrogenase activator (185 aa).

Belongs to the Nudix hydrolase family. In terms of assembly, homodimer. It depends on Mg(2+) as a cofactor.

In terms of biological role, involved in the activation of the NAD-dependent methanol dehydrogenase (MDH). MDH activation by Act involves hydrolytic removal of the nicotinamide mononucleotide (NMN) moiety of the NAD cofactor, changing its ping-pong type of reaction mechanism into a ternary complex reaction mechanism. It requires the presence of magnesium ions and is also able to use ADP-ribose. This chain is Methanol dehydrogenase activator, found in Bacillus methanolicus.